The following is a 224-amino-acid chain: uncharacterized protein (224 aa).

An ABC transporter domain is found at 2 to 221; sequence IEAKNVWKIY…KLRDGEIVEI (220 aa). 38–45 serves as a coordination point for ATP; the sequence is GPSGCGKS.

This sequence belongs to the ABC transporter superfamily.

This is an uncharacterized protein from Methanocaldococcus jannaschii (strain ATCC 43067 / DSM 2661 / JAL-1 / JCM 10045 / NBRC 100440) (Methanococcus jannaschii).